We begin with the raw amino-acid sequence, 269 residues long: Lysyl endopeptidase (269 aa).

3 cysteine pairs are disulfide-bonded: Cys6/Cys216, Cys12/Cys80, and Cys36/Cys58. Residues His57, Asp113, and Ser194 each act as charge relay system in the active site.

It belongs to the peptidase S1 family.

The protein localises to the secreted. It carries out the reaction Preferential cleavage: Lys-|-Xaa, including Lys-|-Pro.. Functionally, highly specific endopeptidase that hydrolyzes lysyl bonds including the Lys-Pro bond. This is Lysyl endopeptidase from Lysobacter enzymogenes.